Reading from the N-terminus, the 218-residue chain is LexA repressor (218 aa).

Residues 31 to 51 (IREIQDGLRISSTSVVAYNLR) constitute a DNA-binding region (H-T-H motif). Catalysis depends on for autocatalytic cleavage activity residues Ser-137 and Lys-176.

It belongs to the peptidase S24 family. In terms of assembly, homodimer.

It catalyses the reaction Hydrolysis of Ala-|-Gly bond in repressor LexA.. Functionally, represses a number of genes involved in the response to DNA damage (SOS response), including recA and lexA. In the presence of single-stranded DNA, RecA interacts with LexA causing an autocatalytic cleavage which disrupts the DNA-binding part of LexA, leading to derepression of the SOS regulon and eventually DNA repair. The protein is LexA repressor of Roseiflexus sp. (strain RS-1).